The primary structure comprises 105 residues: Thioredoxin-like protein slr0233 (105 aa).

One can recognise a Thioredoxin domain in the interval 1–102 (MAVKKQFANF…QAAQLIQQLQ (102 aa)). An intrachain disulfide couples Cys30 to Cys33.

Belongs to the thioredoxin family.

The sequence is that of Thioredoxin-like protein slr0233 from Synechocystis sp. (strain ATCC 27184 / PCC 6803 / Kazusa).